Reading from the N-terminus, the 395-residue chain is Zinc finger protein HD1 (395 aa).

Residues 30-72 form a B box-type 1; atypical zinc finger; sequence PWARPCDGCRAAPSVVYCRADAAYLCASCDARVHAANRVASRH. 8 residues coordinate Zn(2+): cysteine 35, cysteine 38, cysteine 58, histidine 63, cysteine 78, cysteine 81, cysteine 101, and histidine 106. The B box-type 2; atypical zinc-finger motif lies at 73–117; the sequence is ERVRVCEACERAPAALACRADAAALCVACDVQVHSANPLPAITIP. Disordered regions lie at residues 147-176 and 208-228; these read SKDSDNNNNNNNNNDNDNNDNNNSNSSNNG and GMHEQQEQQQQQQEMQKEFAE. A compositionally biased stretch (low complexity) spans 152–175; sequence NNNNNNNNNDNDNNDNNNSNSSNN. A CCT domain is found at 326–368; sequence REARVLRYREKKKARKFEKTIRYETRKAYAEARPRIKGRFAKR.

This sequence belongs to the CONSTANS family. In terms of assembly, interacts with HAL3 in the dark. Phosphorylated by OSK4 in the presence of HDR1.

It localises to the nucleus. Functionally, probable transcription factor involved in the regulation of flower development. Required for the promotion of flowering under short day (SD) conditions and the suppression of flowering under long day (LD) conditions. Positively regulates the floral activator HEADING DATE 3a (HD3A) under SD and negatively under LD conditions. The sequence is that of Zinc finger protein HD1 from Oryza sativa subsp. japonica (Rice).